A 221-amino-acid chain; its full sequence is Glutathione S-transferase alpha-3 (221 aa).

In terms of domain architecture, GST N-terminal spans 3–83; that stretch reads GKPVLHYFDG…YIATKYNLYG (81 aa). An N6-succinyllysine modification is found at lysine 4. Glutathione contacts are provided by residues tyrosine 9, arginine 45, 54–55, and 67–68; these read QV and QT. The 123-residue stretch at 85 to 207 folds into the GST C-terminal domain; sequence DMKERALIDM…LQPGSQRKPL (123 aa).

This sequence belongs to the GST superfamily. Alpha family. Heterodimer of YC1 and YC2.

The protein localises to the cytoplasm. The catalysed reaction is RX + glutathione = an S-substituted glutathione + a halide anion + H(+). The enzyme catalyses androst-5-ene-3,17-dione = androst-4-ene-3,17-dione. It catalyses the reaction pregn-5-ene-3,20-dione = progesterone. Its function is as follows. Conjugation of reduced glutathione to a wide number of exogenous and endogenous hydrophobic electrophiles. Catalyzes isomerization reactions that contribute to the biosynthesis of steroid hormones. Efficiently catalyze obligatory double-bond isomerizations of delta(5)-androstene-3,17-dione and delta(5)-pregnene-3,20-dione, precursors to testosterone and progesterone, respectively. Has substantial activity toward aflatoxin B1-8,9-epoxide. This is Glutathione S-transferase alpha-3 from Rattus norvegicus (Rat).